Reading from the N-terminus, the 120-residue chain is Putative membrane protein insertion efficiency factor (120 aa).

Residues 93-120 form a disordered region; the sequence is GRSCQTDVDGANDDWNPASKRGERESFV.

Belongs to the UPF0161 family.

The protein resides in the cell membrane. Its function is as follows. Could be involved in insertion of integral membrane proteins into the membrane. This is Putative membrane protein insertion efficiency factor from Mycobacterium bovis (strain ATCC BAA-935 / AF2122/97).